The sequence spans 472 residues: Uronate isomerase (472 aa).

Belongs to the metallo-dependent hydrolases superfamily. Uronate isomerase family.

The enzyme catalyses D-glucuronate = D-fructuronate. It carries out the reaction aldehydo-D-galacturonate = keto-D-tagaturonate. The protein operates within carbohydrate metabolism; pentose and glucuronate interconversion. This Xanthomonas axonopodis pv. citri (strain 306) protein is Uronate isomerase.